The primary structure comprises 466 residues: Glutamate--tRNA ligase (466 aa).

Positions 11 to 21 (PSPTGFIHLGN) match the 'HIGH' region motif. Positions 243 to 247 (KMSKR) match the 'KMSKS' region motif. Residue lysine 246 coordinates ATP.

This sequence belongs to the class-I aminoacyl-tRNA synthetase family. Glutamate--tRNA ligase type 1 subfamily. As to quaternary structure, monomer.

The protein localises to the cytoplasm. It carries out the reaction tRNA(Glu) + L-glutamate + ATP = L-glutamyl-tRNA(Glu) + AMP + diphosphate. In terms of biological role, catalyzes the attachment of glutamate to tRNA(Glu) in a two-step reaction: glutamate is first activated by ATP to form Glu-AMP and then transferred to the acceptor end of tRNA(Glu). The chain is Glutamate--tRNA ligase from Cupriavidus taiwanensis (strain DSM 17343 / BCRC 17206 / CCUG 44338 / CIP 107171 / LMG 19424 / R1) (Ralstonia taiwanensis (strain LMG 19424)).